The following is a 224-amino-acid chain: MLDHPKLTARQQQILDLIQAAISRTGAPPTRAEIANTLGFKSANAAEEHLQALARKGVIELVSGTSRGIRLRTDTVRNINAARGTSFGLPLSALAPLMLPLVGRVAAGSPILAQEHIDQTYSVEPSLFQTRPDYLLRVRGMSMRDAGIMDGDLLAVQSAHEARNGQIVVARLGDEVTVKRLRRTTQGVELLPENPDYPVIRVAPEEAFAIEGLAVGLIRNSMSM.

Positions R31–Q51 form a DNA-binding region, H-T-H motif. Catalysis depends on for autocatalytic cleavage activity residues S142 and K179.

Belongs to the peptidase S24 family. Homodimer.

It catalyses the reaction Hydrolysis of Ala-|-Gly bond in repressor LexA.. Its function is as follows. Represses a number of genes involved in the response to DNA damage (SOS response), including recA and lexA. In the presence of single-stranded DNA, RecA interacts with LexA causing an autocatalytic cleavage which disrupts the DNA-binding part of LexA, leading to derepression of the SOS regulon and eventually DNA repair. This Delftia acidovorans (strain DSM 14801 / SPH-1) protein is LexA repressor.